We begin with the raw amino-acid sequence, 2223 residues long: Protein Ycf2 (2223 aa).

1576 to 1583 (GSIGTGRS) contributes to the ATP binding site.

Belongs to the Ycf2 family.

It localises to the plastid. Its subcellular location is the chloroplast stroma. Its function is as follows. Probable ATPase of unknown function. Its presence in a non-photosynthetic plant (Epifagus virginiana) and experiments in tobacco indicate that it has an essential function which is probably not related to photosynthesis. The chain is Protein Ycf2 from Silene latifolia (White campion).